A 430-amino-acid polypeptide reads, in one-letter code: Trigger factor (430 aa).

The region spanning Gly157–Pro242 is the PPIase FKBP-type domain.

This sequence belongs to the FKBP-type PPIase family. Tig subfamily.

The protein resides in the cytoplasm. It catalyses the reaction [protein]-peptidylproline (omega=180) = [protein]-peptidylproline (omega=0). Functionally, involved in protein export. Acts as a chaperone by maintaining the newly synthesized protein in an open conformation. Functions as a peptidyl-prolyl cis-trans isomerase. This Xanthomonas campestris pv. campestris (strain B100) protein is Trigger factor.